Here is a 373-residue protein sequence, read N- to C-terminus: Nodulation protein NolL (373 aa).

A run of 9 helical transmembrane segments spans residues 27-47 (DFAK…QYLI), 62-82 (SIYM…SSGA), 98-118 (QLLL…SAVI), 140-160 (WFIW…TFNR), 164-184 (WIIS…SITP), 212-232 (RYKW…FLGW), 253-273 (QVFL…QSMF), 286-306 (RFVA…QGAV), and 324-344 (RITF…AIRS).

The protein belongs to the acyltransferase 3 family.

It localises to the cell membrane. Thought to be an acetyltransferase that modifies the fucose of the nod factor. The polypeptide is Nodulation protein NolL (nolL) (Mesorhizobium japonicum (strain LMG 29417 / CECT 9101 / MAFF 303099) (Mesorhizobium loti (strain MAFF 303099))).